The chain runs to 360 residues: Protein pelota homolog (360 aa).

This sequence belongs to the eukaryotic release factor 1 family. Pelota subfamily. In terms of assembly, monomer. It depends on a divalent metal cation as a cofactor.

It is found in the cytoplasm. In terms of biological role, may function in recognizing stalled ribosomes, interact with stem-loop structures in stalled mRNA molecules, and effect endonucleolytic cleavage of the mRNA. May play a role in the release non-functional ribosomes and degradation of damaged mRNAs. Has endoribonuclease activity. The chain is Protein pelota homolog from Hyperthermus butylicus (strain DSM 5456 / JCM 9403 / PLM1-5).